The chain runs to 105 residues: N(4)-acetylcytidine amidohydrolase (105 aa).

In terms of domain architecture, ASCH spans 7–93; sequence TFFERFEHDI…VIAEIYPGLE (87 aa). The Proton acceptor role is filled by Lys-21. The active-site Nucleophile is the Thr-24. Glu-74 (proton donor) is an active-site residue.

It belongs to the N(4)-acetylcytidine amidohydrolase family.

It catalyses the reaction N(4)-acetylcytidine + H2O = cytidine + acetate + H(+). The catalysed reaction is N(4)-acetyl-2'-deoxycytidine + H2O = 2'-deoxycytidine + acetate + H(+). The enzyme catalyses N(4)-acetylcytosine + H2O = cytosine + acetate + H(+). Functionally, catalyzes the hydrolysis of N(4)-acetylcytidine (ac4C). The sequence is that of N(4)-acetylcytidine amidohydrolase from Shewanella baltica (strain OS223).